The following is a 559-amino-acid chain: Formate--tetrahydrofolate ligase (559 aa).

ATP is bound at residue 68–75 (TPAGEGKT).

This sequence belongs to the formate--tetrahydrofolate ligase family.

It carries out the reaction (6S)-5,6,7,8-tetrahydrofolate + formate + ATP = (6R)-10-formyltetrahydrofolate + ADP + phosphate. It functions in the pathway one-carbon metabolism; tetrahydrofolate interconversion. This is Formate--tetrahydrofolate ligase from Rhizobium meliloti (strain 1021) (Ensifer meliloti).